Consider the following 254-residue polypeptide: MKTILRPFTLLSRSIFLALFVLFLWSPDAHAMHIMEGFLPPSWSLFWWVLTLPFLVVGFRSLRKIVDANPRMKLLLAMAGAFAFVLSSLKIPSVTGSCSHPTGVGLGAVLFGPSVMSVLGVIVLLFQALLLAHGGLTTLGANAFSMAIAGPFVSYGIYRLMVMSKAPEWLAVFLAAAIGDLMTYVVTSLQLALAFPSVTGGIAASLGKFMTIFALTQVPLAISEGILTVMVFSAIREYASELFPASGTLAKEGV.

The signal sequence occupies residues 1 to 31 (MKTILRPFTLLSRSIFLALFVLFLWSPDAHA). Helical transmembrane passes span 37–57 (GFLP…FLVV), 74–94 (LLLA…IPSV), 106–126 (LGAV…VLLF), 128–148 (ALLL…SMAI), 169–189 (WLAV…VTSL), and 212–232 (IFAL…VMVF).

Belongs to the CbiM family. Forms an energy-coupling factor (ECF) transporter complex composed of an ATP-binding protein (A component, CbiO), a transmembrane protein (T component, CbiQ) and 2 possible substrate-capture proteins (S components, CbiM and CbiN) of unknown stoichimetry.

The protein localises to the cell inner membrane. Its pathway is cofactor biosynthesis; adenosylcobalamin biosynthesis. In terms of biological role, part of the energy-coupling factor (ECF) transporter complex CbiMNOQ involved in cobalt import. The polypeptide is Cobalt transport protein CbiM (Chlorobium limicola (strain DSM 245 / NBRC 103803 / 6330)).